The following is a 172-amino-acid chain: Disulfide bond formation protein B (172 aa).

The Cytoplasmic segment spans residues 1–13 (MNWLAQLPTQRTP). The chain crosses the membrane as a helical span at residues 14–30 (WLLFSGIVFLLEITALF). Over 31–48 (FQYKMGLAPCIMCIYQRT) the chain is Periplasmic. A disulfide bridge links Cys-40 with Cys-43. Residues 49 to 64 (AVLGLLIAGIIGTSNP) form a helical membrane-spanning segment. Residues 65 to 71 (EHRGVRL) lie on the Cytoplasmic side of the membrane. Residues 72-89 (LAYSVWAVSSVWGFIIAR) form a helical membrane-spanning segment. At 90 to 145 (EHIEMQTTTDPFAFSCEFEPNFPAFMPLHEWIPSFFAATGDCGNIDWQFAGLSMPA) the chain is on the periplasmic side. A disulfide bridge connects residues Cys-105 and Cys-131. The chain crosses the membrane as a helical span at residues 146-164 (WMEVIFALFAATLFLLVTS). Residues 165–172 (RLMTKRSL) lie on the Cytoplasmic side of the membrane.

The protein belongs to the DsbB family.

The protein localises to the cell inner membrane. Its function is as follows. Required for disulfide bond formation in some periplasmic proteins. Acts by oxidizing the DsbA protein. This chain is Disulfide bond formation protein B, found in Pseudoalteromonas translucida (strain TAC 125).